The chain runs to 492 residues: MSIEIIISLGIYFIAMLLIGWYAFKKTTDINDYMLGGRGLGPFVTALSAGAADMSGWMLMGVPGAMFATGLSTLWLALGLTIGAYSNYLLLAPRLRAYTEAADDAITIPDFFDKRFQHSSSLLKIVSALIIMIFFTLYTSSGMVSGGRLFESAFGADYKLGLFLTTAVVVLYTLFGGFLAVSLTDFVQGAIMFAALVLVPIVAFTHVGGVAPTFHEIDAVNPHLLDIFKGASVISIISYLAWGLGYYGQPHIIVRFMAIKDIKDLKPARRIGMSWMIITVLGSVLTGLIGVAYAHKFGVAVKDPEMIFIIFSKILFHPLITGFLLSAILAAIMSSISSQLLVTASAVTEDLYRSFFRRKASDKELVMIGRLSVLVIAVIAVLLSLNPNSTILDLVGYAWAGFGSAFGPAILLSLYWKRMNEWGALAAMIVGAATVLIWITTGLAKSTGVYEIIPGFILSMIAGIIVSMITKRPAKASYRLFGVMEKLLKRKK.

The next 13 helical transmembrane spans lie at 3–23 (IEII…GWYA), 40–60 (LGPF…WMLM), 62–82 (VPGA…GLTI), 125–145 (IVSA…GMVS), 161–181 (GLFL…FLAV), 190–210 (AIMF…VGGV), 224–244 (LLDI…AWGL), 271–291 (IGMS…LIGV), 314–334 (ILFH…AIMS), 365–385 (LVMI…LLSL), 394–414 (LVGY…LLSL), 424–444 (ALAA…TGLA), and 449–469 (VYEI…VSMI).

This sequence belongs to the sodium:solute symporter (SSF) (TC 2.A.21) family.

It is found in the cell membrane. It carries out the reaction L-proline(in) + Na(+)(in) = L-proline(out) + Na(+)(out). Functionally, catalyzes the uptake of extracellular proline under high-osmolarity growth conditions. Essential for the use of proline present in the environment as an osmoprotectant. The polypeptide is Osmoregulated proline transporter OpuE (Bacillus subtilis (strain 168)).